An 80-amino-acid chain; its full sequence is OMEGA-myrmeciitoxin(02)-Mg1a (80 aa).

The signal sequence occupies residues 1-30; the sequence is MKNNYISTCIVYLMAALLLISVISIKECTA. Residues 35–75 form the EGF-like domain; the sequence is YGDPCSDDLKDYCIHGDCFFLKELNQPACRCYTGYYGSRCE. 3 disulfides stabilise this stretch: C39/C52, C47/C63, and C65/C74.

The protein belongs to the EGF domain peptide family. As to expression, expressed by the venom gland.

The protein resides in the secreted. Ant peptide with probable defensive activity which acts as a potent agonist of the mammalian epidermal growth factor receptor (EGFR) (EC(50)=6.3 nM). Mimics, both structurally and functionally, vertebrate epidermal growth factor (EGF) peptide hormones. In vivo, intraplantar injection in mice causes long-lasting (several days) hypersensitivity of the injected paw to both mechanical and thermal stimuli. Its long-lasting effect is unusual for venom toxins whose effects are usually immediate. One possible explanation is that it would reduce the duration of a nest attack, discourage future attacks, or enhance the actions of subsequent exposure to other pain-inducing venom peptides. The chain is OMEGA-myrmeciitoxin(02)-Mg1a from Myrmecia gulosa (Red bulldog ant).